The chain runs to 351 residues: Dihydroorotate dehydrogenase (quinone) (351 aa).

Residues 67 to 71 and threonine 91 each bind FMN; that span reads AGFDK. Residue lysine 71 coordinates substrate. Substrate is bound at residue 116–120; sequence NAMGF. FMN-binding residues include asparagine 145 and asparagine 178. Asparagine 178 provides a ligand contact to substrate. Serine 181 acts as the Nucleophile in catalysis. Asparagine 183 lines the substrate pocket. The FMN site is built by lysine 214 and threonine 242. 243 to 244 is a substrate binding site; the sequence is NT. Residues glycine 262, glycine 291, and 312-313 contribute to the FMN site; that span reads YS.

Belongs to the dihydroorotate dehydrogenase family. Type 2 subfamily. As to quaternary structure, monomer. Requires FMN as cofactor.

It is found in the cell membrane. The catalysed reaction is (S)-dihydroorotate + a quinone = orotate + a quinol. It participates in pyrimidine metabolism; UMP biosynthesis via de novo pathway; orotate from (S)-dihydroorotate (quinone route): step 1/1. Catalyzes the conversion of dihydroorotate to orotate with quinone as electron acceptor. This Helicobacter pylori (strain HPAG1) protein is Dihydroorotate dehydrogenase (quinone).